Here is a 320-residue protein sequence, read N- to C-terminus: Probable cell division protein WhiA (320 aa).

The H-T-H motif DNA-binding region spans 282–315; that stretch reads TLKELGEMLSPAIGKSGVNHRLRKIDEIATKLQE.

The protein belongs to the WhiA family.

Its function is as follows. Involved in cell division and chromosome segregation. In Alkaliphilus oremlandii (strain OhILAs) (Clostridium oremlandii (strain OhILAs)), this protein is Probable cell division protein WhiA.